A 902-amino-acid polypeptide reads, in one-letter code: Transcription factor FPSE_08121 (902 aa).

The tract at residues 1–47 is disordered; it reads MVSPDNRPGTQGPSASAHAHDSRVPRKRPGSWDNNPSTAGNRAVKKR. The zn(2)-C6 fungal-type DNA-binding region spans 52–81; that stretch reads CVSCRDRKVRCDVVNGGPPCTNCRLDDVDC. Disordered regions lie at residues 92–189, 208–234, 258–277, and 820–839; these read NPAR…EAEQ, HCEQQPQPQPSQGAATRSTPSAQPANP, ATEAPPSSSRMDNVSASANT, and TGVALTGQRSRQPSAGPNMT. Low complexity predominate over residues 120-137; the sequence is TDADTAAPGPAPGSASAT. The segment covering 168-177 has biased composition (acidic residues); the sequence is ETICDDDENE. Composition is skewed to polar residues over residues 178–187, 220–234, 262–277, and 826–839; these read NNSWHNQQEA, GAATRSTPSAQPANP, PPSSSRMDNVSASANT, and GQRSRQPSAGPNMT.

The protein localises to the nucleus. Transcription factor; part of the Fusarium detoxification of benzoxazolinone cluster involved in the degradation of benzoxazolinones produced by the host plant. Maize, wheat, and rye produce the 2 benzoxazinone phytoanticipins 2,4-dihy-droxy-7-methoxy-1,4-benzoxazin-3-one (DIMBOA) and 2,4-dihydroxy-1,4-benzoxazin-3-one (DIBOA) that, due to their inherent instability once released, spontaneously degrade to the more stable corresponding benzoxazolinones, 6-methoxy-2-benzoxazolinone (MBOA) and 2-benzoxazolinone (BOA), respectively. FPSE_08121 positively regulates the expression of the FBD cluster gene FPSE_08120 in response to 2-aminophenol (2-AP) treatment and contributes quantitatively to benzoxazolinone tolerance. The chain is Transcription factor FPSE_08121 from Fusarium pseudograminearum (strain CS3096) (Wheat and barley crown-rot fungus).